A 449-amino-acid chain; its full sequence is Exodeoxyribonuclease 7 large subunit (449 aa).

Belongs to the XseA family. Heterooligomer composed of large and small subunits.

The protein localises to the cytoplasm. The catalysed reaction is Exonucleolytic cleavage in either 5'- to 3'- or 3'- to 5'-direction to yield nucleoside 5'-phosphates.. Bidirectionally degrades single-stranded DNA into large acid-insoluble oligonucleotides, which are then degraded further into small acid-soluble oligonucleotides. This is Exodeoxyribonuclease 7 large subunit from Salmonella paratyphi B (strain ATCC BAA-1250 / SPB7).